We begin with the raw amino-acid sequence, 70 residues long: Putative membrane protein insertion efficiency factor (70 aa).

The protein belongs to the UPF0161 family.

Its subcellular location is the cell inner membrane. In terms of biological role, could be involved in insertion of integral membrane proteins into the membrane. The polypeptide is Putative membrane protein insertion efficiency factor (Rhizorhabdus wittichii (strain DSM 6014 / CCUG 31198 / JCM 15750 / NBRC 105917 / EY 4224 / RW1) (Sphingomonas wittichii)).